The chain runs to 101 residues: Interleukin-8 (101 aa).

Positions 1–22 (MTSKLAVALLAAFLLSAALCEG) are cleaved as a signal peptide. Citrulline is present on Arg-27. 2 disulfides stabilise this stretch: Cys-34–Cys-61 and Cys-36–Cys-77.

This sequence belongs to the intercrine alpha (chemokine CxC) family. As to quaternary structure, homodimer. Interacts with TNFAIP6 (via Link domain); this interaction interferes with chemokine binding to glycosaminoglycans. Citrullination at Arg-27 prevents proteolysis, and dampens tissue inflammation, it also enhances leukocytosis, possibly through impaired chemokine clearance from the blood circulation.

The protein resides in the secreted. Its function is as follows. Chemotactic factor that mediates inflammatory response by attracting neutrophils, basophils, and T-cells to clear pathogens and protect the host from infection. Also plays an important role in neutrophil activation. Released in response to an inflammatory stimulus, exerts its effect by binding to the G-protein-coupled receptors CXCR1 and CXCR2, primarily found in neutrophils, monocytes and endothelial cells. G-protein heterotrimer (alpha, beta, gamma subunits) constitutively binds to CXCR1/CXCR2 receptor and activation by IL8 leads to beta and gamma subunits release from Galpha (GNAI2 in neutrophils) and activation of several downstream signaling pathways including PI3K and MAPK pathways. In Macaca mulatta (Rhesus macaque), this protein is Interleukin-8 (CXCL8).